We begin with the raw amino-acid sequence, 60 residues long: Large ribosomal subunit protein bL32 (60 aa).

A disordered region spans residues 1–43 (MAVQQNKKSPSKRGMHRSHDALTNPPLAIEPTTGEIHLRHHIS).

This sequence belongs to the bacterial ribosomal protein bL32 family.

The polypeptide is Large ribosomal subunit protein bL32 (Nitrosomonas europaea (strain ATCC 19718 / CIP 103999 / KCTC 2705 / NBRC 14298)).